Consider the following 197-residue polypeptide: Large ribosomal subunit protein uL10 (197 aa).

The disordered stretch occupies residues 163 to 197 (GAPAAAEAPAAEESADSAAEAAAEAPAEAPAAEEN).

This sequence belongs to the universal ribosomal protein uL10 family. As to quaternary structure, part of the ribosomal stalk of the 50S ribosomal subunit. The N-terminus interacts with L11 and the large rRNA to form the base of the stalk. The C-terminus forms an elongated spine to which L12 dimers bind in a sequential fashion forming a multimeric L10(L12)X complex.

Functionally, forms part of the ribosomal stalk, playing a central role in the interaction of the ribosome with GTP-bound translation factors. This chain is Large ribosomal subunit protein uL10, found in Pseudarthrobacter chlorophenolicus (strain ATCC 700700 / DSM 12829 / CIP 107037 / JCM 12360 / KCTC 9906 / NCIMB 13794 / A6) (Arthrobacter chlorophenolicus).